Consider the following 535-residue polypeptide: Probable cytochrome P450 12b2, mitochondrial (535 aa).

Cys479 serves as a coordination point for heme.

It belongs to the cytochrome P450 family. Heme is required as a cofactor.

The protein resides in the mitochondrion membrane. This chain is Probable cytochrome P450 12b2, mitochondrial (Cyp12b2), found in Drosophila melanogaster (Fruit fly).